The chain runs to 109 residues: MQQLEFYHIAFLILAVILEIIANILLKMSDGFRRVWLGILSLLSVLGAFSALAQAVKGIELSVAYALWGGFGIAATVAAGWILFNQRLNYKGWIGLILLLAGMVMIKLS.

A run of 4 helical transmembrane segments spans residues phenylalanine 6 to leucine 26, valine 35 to alanine 55, alanine 64 to phenylalanine 84, and leucine 88 to leucine 108.

The protein belongs to the drug/metabolite transporter (DMT) superfamily. Small multidrug resistance (SMR) (TC 2.A.7.1) family. MdtI subfamily. Forms a complex with MdtJ.

It is found in the cell inner membrane. In terms of biological role, catalyzes the excretion of spermidine. The polypeptide is Spermidine export protein MdtI (Yersinia enterocolitica serotype O:8 / biotype 1B (strain NCTC 13174 / 8081)).